The sequence spans 88 residues: Probable Fe(2+)-trafficking protein (88 aa).

The protein belongs to the Fe(2+)-trafficking protein family.

In terms of biological role, could be a mediator in iron transactions between iron acquisition and iron-requiring processes, such as synthesis and/or repair of Fe-S clusters in biosynthetic enzymes. This chain is Probable Fe(2+)-trafficking protein, found in Alkalilimnicola ehrlichii (strain ATCC BAA-1101 / DSM 17681 / MLHE-1).